The sequence spans 315 residues: Methionyl-tRNA formyltransferase (315 aa).

113-116 is a binding site for (6S)-5,6,7,8-tetrahydrofolate; sequence SLLP.

The protein belongs to the Fmt family.

It carries out the reaction L-methionyl-tRNA(fMet) + (6R)-10-formyltetrahydrofolate = N-formyl-L-methionyl-tRNA(fMet) + (6S)-5,6,7,8-tetrahydrofolate + H(+). Attaches a formyl group to the free amino group of methionyl-tRNA(fMet). The formyl group appears to play a dual role in the initiator identity of N-formylmethionyl-tRNA by promoting its recognition by IF2 and preventing the misappropriation of this tRNA by the elongation apparatus. The protein is Methionyl-tRNA formyltransferase of Enterobacter sp. (strain 638).